Here is a 440-residue protein sequence, read N- to C-terminus: 23S rRNA (uracil(1939)-C(5))-methyltransferase RlmD (440 aa).

The TRAM domain maps to 10-68; the sequence is KSTQPQRIEFTVDSLDHHCVGIGRHQGKAIFIEGALPGELVKARILEDKKQYAHAALQQ. Residues cysteine 81, cysteine 87, cysteine 90, and cysteine 169 each contribute to the [4Fe-4S] cluster site. 6 residues coordinate S-adenosyl-L-methionine: glutamine 273, phenylalanine 302, asparagine 307, glutamate 323, aspartate 350, and aspartate 371. Cysteine 397 functions as the Nucleophile in the catalytic mechanism.

The protein belongs to the class I-like SAM-binding methyltransferase superfamily. RNA M5U methyltransferase family. RlmD subfamily.

The enzyme catalyses uridine(1939) in 23S rRNA + S-adenosyl-L-methionine = 5-methyluridine(1939) in 23S rRNA + S-adenosyl-L-homocysteine + H(+). Its function is as follows. Catalyzes the formation of 5-methyl-uridine at position 1939 (m5U1939) in 23S rRNA. This is 23S rRNA (uracil(1939)-C(5))-methyltransferase RlmD from Aeromonas hydrophila subsp. hydrophila (strain ATCC 7966 / DSM 30187 / BCRC 13018 / CCUG 14551 / JCM 1027 / KCTC 2358 / NCIMB 9240 / NCTC 8049).